The following is a 176-amino-acid chain: Peptidyl-prolyl cis-trans isomerase cyp6 (176 aa).

Positions 10 to 173 constitute a PPIase cyclophilin-type domain; sequence FFDIAVNGQH…AKIEITDCGE (164 aa).

Belongs to the cyclophilin-type PPIase family.

It carries out the reaction [protein]-peptidylproline (omega=180) = [protein]-peptidylproline (omega=0). Its function is as follows. PPIases accelerate the folding of proteins. It catalyzes the cis-trans isomerization of proline imidic peptide bonds in oligopeptides. This Rhizopus delemar (strain RA 99-880 / ATCC MYA-4621 / FGSC 9543 / NRRL 43880) (Mucormycosis agent) protein is Peptidyl-prolyl cis-trans isomerase cyp6 (cyp6).